A 471-amino-acid polypeptide reads, in one-letter code: Glutamate--tRNA ligase (471 aa).

A 'HIGH' region motif is present at residues 9 to 19; that stretch reads PSPTGYLHVGG. Residues cysteine 98, cysteine 100, cysteine 125, and histidine 127 each coordinate Zn(2+). The 'KMSKS' region motif lies at 237-241; it reads KLSKR. Lysine 240 serves as a coordination point for ATP.

This sequence belongs to the class-I aminoacyl-tRNA synthetase family. Glutamate--tRNA ligase type 1 subfamily. Monomer. The cofactor is Zn(2+).

The protein resides in the cytoplasm. The enzyme catalyses tRNA(Glu) + L-glutamate + ATP = L-glutamyl-tRNA(Glu) + AMP + diphosphate. Its function is as follows. Catalyzes the attachment of glutamate to tRNA(Glu) in a two-step reaction: glutamate is first activated by ATP to form Glu-AMP and then transferred to the acceptor end of tRNA(Glu). This Salmonella choleraesuis (strain SC-B67) protein is Glutamate--tRNA ligase.